Reading from the N-terminus, the 557-residue chain is Probable serine/threonine-protein kinase WNK7 (557 aa).

A Protein kinase domain is found at 28–285 (IRYKEVIGKG…AEELLLDSFL (258 aa)). Residues 108 to 111 (TELF) and K158 contribute to the ATP site. D175 acts as the Proton acceptor in catalysis. The segment covering 451 to 477 (QNQSSKDNHQNGASSQAGESISHSLSS) has biased composition (polar residues). Residues 451–517 (QNQSSKDNHQ…EEEEDERLKE (67 aa)) are disordered. Residue S505 is modified to Phosphoserine.

This sequence belongs to the protein kinase superfamily. Ser/Thr protein kinase family. WNK subfamily.

It catalyses the reaction L-seryl-[protein] + ATP = O-phospho-L-seryl-[protein] + ADP + H(+). The catalysed reaction is L-threonyl-[protein] + ATP = O-phospho-L-threonyl-[protein] + ADP + H(+). Its function is as follows. May regulate flowering time by modulating the photoperiod pathway. This is Probable serine/threonine-protein kinase WNK7 (WNK7) from Arabidopsis thaliana (Mouse-ear cress).